We begin with the raw amino-acid sequence, 300 residues long: Ribonuclease HIII (300 aa).

The RNase H type-2 domain maps to 83–300 (IPIIGSDEVG…THKAQALLTK (218 aa)). Aspartate 89, glutamate 90, and aspartate 194 together coordinate a divalent metal cation.

Belongs to the RNase HII family. RnhC subfamily. The cofactor is Mn(2+). It depends on Mg(2+) as a cofactor.

The protein resides in the cytoplasm. The catalysed reaction is Endonucleolytic cleavage to 5'-phosphomonoester.. In terms of biological role, endonuclease that specifically degrades the RNA of RNA-DNA hybrids. The chain is Ribonuclease HIII from Streptococcus pyogenes serotype M49 (strain NZ131).